The sequence spans 108 residues: Small ribosomal subunit protein eS25y (108 aa).

Positions 1-36 are disordered; it reads MAPKKDKVPPPSSKPAKSGGGKQKKKKWSKGKQKEK. A compositionally biased stretch (basic residues) spans 22–31; that stretch reads KQKKKKWSKG.

This sequence belongs to the eukaryotic ribosomal protein eS25 family.

The protein is Small ribosomal subunit protein eS25y (RPS25B) of Arabidopsis thaliana (Mouse-ear cress).